The primary structure comprises 178 residues: Nuclear transcription factor Y subunit B-2 (178 aa).

Residues 39 to 45 mediate DNA binding; sequence LPIANIS. The tract at residues 66–77 is subunit association domain (SAD); the sequence is LQECVSEFISFV. Residues 131–156 form a disordered region; sequence SSKAGDGSVKKDTIGPHSGASSSSAQ.

This sequence belongs to the NFYB/HAP3 subunit family. In terms of assembly, heterotrimeric transcription factor composed of three components, NF-YA, NF-YB and NF-YC. NF-YB and NF-YC must interact and dimerize for NF-YA association and DNA binding. Interacts with NFYC4 and NFYC6. Ubiquitous.

The protein resides in the nucleus. Its function is as follows. Component of the NF-Y/HAP transcription factor complex. The NF-Y complex stimulates the transcription of various genes by recognizing and binding to a CCAAT motif in promoters. May regulate the expression of photosynthetic genes, and may be involved in chloroplast and amyloplast development. This Oryza sativa subsp. japonica (Rice) protein is Nuclear transcription factor Y subunit B-2 (NFYB2).